Reading from the N-terminus, the 251-residue chain is MKKLVLLRHGESTWNKENRFTGWTDVDLTPKGAEEAHNSGRLLREAGFTFDIAYTSVLKRAIRTLWIVLDEMDQMWIPVESSWRLNERHYGALQGLNKLETAVAYGEEQVLIWRRSYDIRPPALTPDDPRYPGCDPRYRNLPKQDIPLTECLQDTVSRFLPYWRESIAPQVKSDKSVLITAHGNSLRALVMYLDNLSEGEIMELNIPTGIPLVYELDDGLKPIRSYYLGDQAKIEQAMQVVANQGKILPNL.

Substrate is bound by residues 8-15, 21-22, Arg-60, 87-90, Lys-98, 114-115, and 183-184; these read RHGESTWN, TG, ERHY, RR, and GN. His-9 acts as the Tele-phosphohistidine intermediate in catalysis. Glu-87 serves as the catalytic Proton donor/acceptor.

The protein belongs to the phosphoglycerate mutase family. BPG-dependent PGAM subfamily. As to quaternary structure, homodimer.

The enzyme catalyses (2R)-2-phosphoglycerate = (2R)-3-phosphoglycerate. It participates in carbohydrate degradation; glycolysis; pyruvate from D-glyceraldehyde 3-phosphate: step 3/5. Catalyzes the interconversion of 2-phosphoglycerate and 3-phosphoglycerate. This Nitrosospira multiformis (strain ATCC 25196 / NCIMB 11849 / C 71) protein is 2,3-bisphosphoglycerate-dependent phosphoglycerate mutase 2.